The sequence spans 471 residues: MIVADSECRAELKGYLPGAGEEQRESRVRRGPRGPSAFIPVEEVLQEGAESLEQHLGLEALMSSGRVDNLAVVMGLHPDYFTSFWRLHCLLLHTDGPLANSWRHYIAIMAAARHQCSYLVGSHMAEFLQTGGDPEWLLGLHRAPEKLRKLSEINKLLAHRPWLITKEHIQALLKTGEHSWSLAELIQALVLLTHCHSLASFVFGCGILPEGDPEGSPAPQAPSPPSEQSTPPSRDSLNHSGGFEAARDVEALMERMRQLQESLLQDEGASQEEMESRFELEKSESLLVTPSVDILEPFANPDMLCFVEDPTFGYEDFTRRGTQAPPTFRAQDYTWEDHGYSLIQRLYPEGGQLLDEKFQAAYSLTYNTIAMHSGVDTSVLRRAIWNYIHCVFGIRYDDYDYGEVNQLLERNLKVYIKTVACYPEKTTRRMYNHFWRHFRHSEKVHVNLLLLEARMQAALLYALRAITRYMT.

N-acetylmethionine is present on Met1. Positions 57-230 (GLEALMSSGR…APSPPSEQST (174 aa)) are N-terminal domain; mediates the alkylhydroperoxide reductase activity. Cys116 (cysteine sulfenic acid (-SOH) intermediate) is an active-site residue. Residue Lys166 forms a Glycyl lysine isopeptide (Lys-Gly) (interchain with G-Cter in ubiquitin) linkage. The disordered stretch occupies residues 212 to 241 (DPEGSPAPQAPSPPSEQSTPPSRDSLNHSG). Ser240 bears the Phosphoserine mark. The segment at 299-471 (ANPDMLCFVE…ALRAITRYMT (173 aa)) is C-terminal domain; mediates TORC1 regulation. Residues 365-368 (TYNT), Thr377, and Glu442 each bind L-leucine.

Belongs to the sestrin family. Interacts with the GATOR2 complex which is composed of MIOS, SEC13, SEH1L, WDR24 and WDR59; the interaction is negatively regulated by leucine. Conveys leucine availability via direct interaction with SEH1L and WDR24 components of the GATOR2 complex. Interacts with RRAGA, RRAGB, RRAGC and RRAGD; may function as a guanine nucleotide dissociation inhibitor for RRAGs and regulate them. May interact with the TORC2 complex. Interacts with KEAP1, RBX1, SQSTM and ULK1; to regulate the degradation of KEAP1. May also associate with the complex composed of TSC1, TSC2 and the AMP-responsive protein kinase/AMPK to regulate TORC1 signaling. May interact with PRDX1. Post-translationally, phosphorylated by ULK1 at multiple sites. Ubiquitinated at Lys-166 by RNF167 via 'Lys-63'-linked polyubiquitination in response to leucine deprivation: ubiquitination promotes SESN2-interaction with the GATOR2 complex, leading to inhibit the TORC1 signaling pathway. Deubiquitinated at Lys-166 by STAMBPL1, promoting the TORC1 signaling pathway. Ubiquitinated by RNF186; ubiquitination mediates proteasomal degradation.

Its subcellular location is the cytoplasm. It carries out the reaction a hydroperoxide + L-cysteinyl-[protein] = S-hydroxy-L-cysteinyl-[protein] + an alcohol. Functionally, functions as an intracellular leucine sensor that negatively regulates the mTORC1 signaling pathway through the GATOR complex. In absence of leucine, binds the GATOR subcomplex GATOR2 and prevents mTORC1 signaling. Binding of leucine to SESN2 disrupts its interaction with GATOR2 thereby activating the TORC1 signaling pathway. This stress-inducible metabolic regulator also plays a role in protection against oxidative and genotoxic stresses. May negatively regulate protein translation in response to endoplasmic reticulum stress, via mTORC1. May positively regulate the transcription by NFE2L2 of genes involved in the response to oxidative stress by facilitating the SQSTM1-mediated autophagic degradation of KEAP1. May also mediate TP53 inhibition of TORC1 signaling upon genotoxic stress. Moreover, may prevent the accumulation of reactive oxygen species (ROS) through the alkylhydroperoxide reductase activity born by the N-terminal domain of the protein. Was originally reported to contribute to oxidative stress resistance by reducing PRDX1. However, this could not be confirmed. The chain is Sestrin-2 from Bos taurus (Bovine).